A 430-amino-acid polypeptide reads, in one-letter code: UDP-N-acetylglucosamine 1-carboxyvinyltransferase 1 (430 aa).

A phosphoenolpyruvate-binding site is contributed by 22–23 (KN). Arg-93 is a UDP-N-acetyl-alpha-D-glucosamine binding site. Catalysis depends on Cys-117, which acts as the Proton donor. Cys-117 carries the post-translational modification 2-(S-cysteinyl)pyruvic acid O-phosphothioketal. UDP-N-acetyl-alpha-D-glucosamine contacts are provided by residues 122 to 126 (RPVDL), Asp-305, and Val-327.

This sequence belongs to the EPSP synthase family. MurA subfamily.

It is found in the cytoplasm. The enzyme catalyses phosphoenolpyruvate + UDP-N-acetyl-alpha-D-glucosamine = UDP-N-acetyl-3-O-(1-carboxyvinyl)-alpha-D-glucosamine + phosphate. It participates in cell wall biogenesis; peptidoglycan biosynthesis. Its function is as follows. Cell wall formation. Adds enolpyruvyl to UDP-N-acetylglucosamine. The polypeptide is UDP-N-acetylglucosamine 1-carboxyvinyltransferase 1 (Listeria innocua serovar 6a (strain ATCC BAA-680 / CLIP 11262)).